Consider the following 530-residue polypeptide: Arginine--tRNA ligase (530 aa).

Positions 113-123 match the 'HIGH' region motif; the sequence is ANPTGPLHIGH.

It belongs to the class-I aminoacyl-tRNA synthetase family. In terms of assembly, monomer.

Its subcellular location is the cytoplasm. It carries out the reaction tRNA(Arg) + L-arginine + ATP = L-arginyl-tRNA(Arg) + AMP + diphosphate. In Campylobacter jejuni subsp. jejuni serotype O:2 (strain ATCC 700819 / NCTC 11168), this protein is Arginine--tRNA ligase.